Consider the following 262-residue polypeptide: Apolipoprotein A-I-2 (262 aa).

Positions 1–18 (MQFLALALTILLAAATQA) are cleaved as a signal peptide. The interval 32 to 63 (VKVAMMEYMAQVKETAQRSIDHLDDTEYKEYK) is 3 X approximate tandem repeats. A run of 2 repeats spans residues 64 to 85 (VQLS…ESLA) and 87 to 107 (YSEA…AEVM). The interval 64–262 (VQLSQSLDNL…YETISQAMKA (199 aa)) is 10 X approximate tandem repeats. Residues 108–118 (KDVEELRSQLE) form a 3; half-length repeat. Repeat copies occupy residues 119-140 (PKRA…KRLE), 141-162 (PLIK…VKIE), 163-184 (PVVE…AKLM), 185-206 (PIVE…TLAS), and 207-228 (PYAE…EKVV). Residues 229 to 239 (PLTTDFKGQLG) form a 9; half-length repeat. Copy 10 of the repeat occupies 240–262 (PAAEQAKEKLMALYETISQAMKA).

It belongs to the apolipoprotein A1/A4/E family.

It localises to the secreted. Participates in the reverse transport of cholesterol from tissues to the liver for excretion by promoting cholesterol efflux from tissues and by acting as a cofactor for the lecithin cholesterol acyltransferase (LCAT). This is Apolipoprotein A-I-2 from Oncorhynchus mykiss (Rainbow trout).